The chain runs to 142 residues: uncharacterized protein (142 aa).

The segment at 1 to 22 is disordered; that stretch reads MSGSVNQNTDQHSQDSSSTPNN. 2 consecutive transmembrane segments (helical) span residues 63 to 83 and 109 to 129; these read LFVM…VLLV and IIDG…FVDL.

It localises to the membrane. This is an uncharacterized protein from Acanthamoeba polyphaga mimivirus (APMV).